The primary structure comprises 261 residues: LIM and SH3 domain protein 1 (261 aa).

The residue at position 1 (Met-1) is an N-acetylmethionine. The LIM zinc-binding domain occupies 5–56; sequence CARCGKIVYPTEKVNCLDKFWHKACFHCETCKMTLNMKNYKGYEKKPYCNAH. Lys-42 carries the post-translational modification N6-acetyllysine. 2 Nebulin repeats span residues 61 to 95 and 97 to 131; these read SFTM…KNKG and GFSV…KSRM. The residue at position 68 (Thr-68) is a Phosphothreonine. N6-methyllysine is present on Lys-75. At Ser-99 the chain carries Phosphoserine. Position 104 is a phosphothreonine (Thr-104). Residues 111-186 form a disordered region; the sequence is KKTQDQISNI…QPVAQSYGGY (76 aa). The residue at position 112 (Lys-112) is an N6-succinyllysine. Residue Ser-118 is modified to Phosphoserine. The span at 121-130 shows a compositional bias: basic and acidic residues; sequence KYHEEFEKSR. Phosphoserine occurs at positions 134 and 146. Residues 167-183 show a composition bias toward low complexity; it reads SAPVYQQPQQQPVAQSY. Residues 202–261 form the SH3 domain; it reads GGGKRYRAVYDYSAADEDEVSFQDGDTIVNVQQIDDGWMYGTVERTGDTGMLPANYVEAI.

Interacts with F-actin. Interacts with ANKRD54. Interacts with KBTBD10.

Its subcellular location is the cytoplasm. The protein resides in the cell cortex. The protein localises to the cytoskeleton. Plays an important role in the regulation of dynamic actin-based, cytoskeletal activities. Agonist-dependent changes in LASP1 phosphorylation may also serve to regulate actin-associated ion transport activities, not only in the parietal cell but also in certain other F-actin-rich secretory epithelial cell types. The chain is LIM and SH3 domain protein 1 (LASP1) from Homo sapiens (Human).